A 454-amino-acid polypeptide reads, in one-letter code: Probable tRNA methyltransferase 9B (454 aa).

A Phosphoserine modification is found at Ser214.

It belongs to the methyltransferase superfamily. Down-regulated in breast, bladder, colorectal, cervix and testicular carcinomas.

Its function is as follows. May modify wobble uridines in specific arginine and glutamic acid tRNAs. Acts as a tumor suppressor by promoting the expression of LIN9. In Homo sapiens (Human), this protein is Probable tRNA methyltransferase 9B.